The following is a 507-amino-acid chain: ATP synthase subunit alpha, chloroplastic (507 aa).

170–177 provides a ligand contact to ATP; it reads GDRQTGKT. Position 257 is a phosphothreonine (Thr-257).

This sequence belongs to the ATPase alpha/beta chains family. F-type ATPases have 2 components, CF(1) - the catalytic core - and CF(0) - the membrane proton channel. CF(1) has five subunits: alpha(3), beta(3), gamma(1), delta(1), epsilon(1). CF(0) has four main subunits: a, b, b' and c.

The protein localises to the plastid. Its subcellular location is the chloroplast thylakoid membrane. The enzyme catalyses ATP + H2O + 4 H(+)(in) = ADP + phosphate + 5 H(+)(out). In terms of biological role, produces ATP from ADP in the presence of a proton gradient across the membrane. The alpha chain is a regulatory subunit. This chain is ATP synthase subunit alpha, chloroplastic, found in Aethionema grandiflorum (Persian stone-cress).